The chain runs to 531 residues: NAD(P)H-quinone oxidoreductase chain 4 (531 aa).

Transmembrane regions (helical) follow at residues 9–29 (FPWLSASILFPIGSAFVIPFF), 41–61 (FALSIALITFLITVGSYINGF), 93–113 (MPLILLTSFITALAVLAAWPV), 117–137 (PKLFFFLILVMDGGQIAVFAV), 141–161 (LLFFLTWELELIPVYLLLAIW), 173–193 (FIIYTAGSSIFILLAALAMGF), 217–237 (IFCYVGLLIAFGVKLPIVPLH), 248–268 (TAPVHMLLAGILLKMGGYALL), 282–302 (FAPLLIVLGVVNIIYAALTSF), 311–331 (IAYSSISHMGFVLIGIGSFSS), 337–357 (AMLQMVSHGLIGASLFFLVGA), 381–401 (FALWTACSLASLALPGMSGFV), 422–442 (VVMASLAAIGVILTPIYLLSM), and 469–489 (VYIIACLLLPIIGIGLYPRLV).

It belongs to the complex I subunit 4 family.

It is found in the cellular thylakoid membrane. The enzyme catalyses a plastoquinone + NADH + (n+1) H(+)(in) = a plastoquinol + NAD(+) + n H(+)(out). It carries out the reaction a plastoquinone + NADPH + (n+1) H(+)(in) = a plastoquinol + NADP(+) + n H(+)(out). In terms of biological role, NDH-1 shuttles electrons from NAD(P)H, via FMN and iron-sulfur (Fe-S) centers, to quinones in the respiratory chain. The immediate electron acceptor for the enzyme in this species is believed to be plastoquinone. Couples the redox reaction to proton translocation (for every two electrons transferred, four hydrogen ions are translocated across the cytoplasmic membrane), and thus conserves the redox energy in a proton gradient. The sequence is that of NAD(P)H-quinone oxidoreductase chain 4 from Prochlorococcus marinus (strain MIT 9301).